A 286-amino-acid chain; its full sequence is Soluble epoxide hydrolase (286 aa).

The AB hydrolase-1 domain maps to 26–123 (YPLVLLHGWP…DLVERLFILD (98 aa)). Catalysis depends on aspartate 99, which acts as the Nucleophile. Tyrosine 209 serves as the catalytic Proton donor. Histidine 264 (proton acceptor) is an active-site residue.

Belongs to the AB hydrolase superfamily. Epoxide hydrolase family. Homotetramer.

It is found in the cytoplasm. The protein resides in the cell membrane. It catalyses the reaction an epoxide + H2O = an ethanediol. Its function is as follows. Involved in catabolic degradation of epoxides. Shows highest activity towards C6 and C7 carbocyclic epoxides. Also active towards linear 1,2-epoxyalkanes. The polypeptide is Soluble epoxide hydrolase (Corynebacterium sp. (strain C12)).